A 588-amino-acid chain; its full sequence is Sulfite reductase [NADPH] hemoprotein beta-component (588 aa).

Residues cysteine 442, cysteine 448, cysteine 487, and cysteine 491 each contribute to the [4Fe-4S] cluster site. Cysteine 491 provides a ligand contact to siroheme.

Belongs to the nitrite and sulfite reductase 4Fe-4S domain family. As to quaternary structure, alpha(8)-beta(8). The alpha component is a flavoprotein, the beta component is a hemoprotein. Siroheme serves as cofactor. The cofactor is [4Fe-4S] cluster.

It catalyses the reaction hydrogen sulfide + 3 NADP(+) + 3 H2O = sulfite + 3 NADPH + 4 H(+). The protein operates within sulfur metabolism; hydrogen sulfide biosynthesis; hydrogen sulfide from sulfite (NADPH route): step 1/1. Its function is as follows. Component of the sulfite reductase complex that catalyzes the 6-electron reduction of sulfite to sulfide. This is one of several activities required for the biosynthesis of L-cysteine from sulfate. The polypeptide is Sulfite reductase [NADPH] hemoprotein beta-component (Actinobacillus pleuropneumoniae serotype 3 (strain JL03)).